The sequence spans 809 residues: MSTSKYSKMISSKHGYKKTRIKNNTSDSDLFNLVMPKADVVGFKSKQGGISRQAISWAKFARLNNFYIWLFLAAVGLLGSIYLVAVDLIFKYVVFSWREAFMSLTENYFLQYLSFIAWTVALATGSCFIIKKICPAAVGSGIPDLKSIFSGFWNPFVVAPMVLLWKTIGLLLSYGSGLSIGKEGPYIHISATLANTLLSIKPFKSIAQNDTQRSQLLAACCALGVAATFGSPIGGVLFSIEATGTFYLISNYWRAFFTATVGAVGIKILLSNPSNDLLESFRTHFADLNLASAQLIAFIILGVLCGLLASLFISLYTKIYNWKKHNAELFKKITPFGEVIIVAAATAILSFPLKFLRLDHATAVHTMFTATPDSDNSEVLSELAVWTDSMPFNHGIILACFLYVVVKLVLTAVSITLPIPYGIYIPLFAIGSAVGRFVGELMLVLFPNSKEIYPTGYAVVGAAALCGGATRTVSSAMIILELTNDLTYMVPVLLGVVLSCGIGNLLNHSIYDCFLKNKNLPYLPFYKAKSDSLIARDVMKRDLYYVCQNTTLSQISNLLKRVDEHSIPVVSSDNDLQLIGTISTTTLEEVIAYHERLHSYSKSPLSLSDNGIDINDNDNNDNINNNQNNNNNNNNNNNNNNSNNQNNSLVSEAIEMNVLSDSDNDENNNLIPNIPINDNNIIIQNNIRNNNNNNFSDNNNNYNNNNYNNNNNNNNDNNTNNDNNINNNSNDINESISEETTIDLVQMELQNPWVVIDSSPFQIQETMPVRKIVFMFMMLGGNILYVTNKGKLTGVVAKTELVHQNNNKH.

The Cytoplasmic segment spans residues 1–65 (MSTSKYSKMI…SWAKFARLNN (65 aa)). 11 consecutive transmembrane segments (helical) span residues 66–86 (FYIW…LVAV), 110–130 (LQYL…CFII), 152–172 (FWNP…GLLL), 218–238 (AACC…GVLF), 246–266 (FYLI…AVGI), 295–315 (LIAF…FISL), 333–353 (ITPF…SFPL), 395–415 (GIIL…AVSI), 425–445 (IPLF…MLVL), 459–479 (VVGA…AMII), and 486–506 (LTYM…GNLL). The CBS 1 domain occupies 539–597 (MKRDLYYVCQNTTLSQISNLLKRVDEHSIPVVSSDNDLQLIGTISTTTLEEVIAYHERL). Disordered regions lie at residues 604-646 (PLSL…NNQN) and 692-729 (NNNF…NNNS). Positions 620–646 (NDNINNNQNNNNNNNNNNNNNNSNNQN) are enriched in low complexity. Residues 756–809 (IDSSPFQIQETMPVRKIVFMFMMLGGNILYVTNKGKLTGVVAKTELVHQNNNKH) form the CBS 2 domain.

This sequence belongs to the chloride channel (TC 2.A.49) family.

It localises to the membrane. Its function is as follows. Voltage-gated chloride channel. Chloride channels may have several functions including the regulation of cell volume, membrane potential stabilization and signal transduction. The chain is Chloride channel protein F (clcF) from Dictyostelium discoideum (Social amoeba).